Consider the following 383-residue polypeptide: Phospho-N-acetylmuramoyl-pentapeptide-transferase (383 aa).

Helical transmembrane passes span 26–46 (TAGA…GVIE), 73–93 (TMGG…WAEL), 98–118 (IILL…DDFL), 131–151 (IYKI…LYYF), 182–202 (IFLP…IPFA), 221–241 (GLAI…SYVS), 258–278 (AGEV…FLWF), 283–305 (AQVF…IALF), and 360–380 (QVVF…IATL).

This sequence belongs to the glycosyltransferase 4 family. MraY subfamily. Mg(2+) is required as a cofactor.

The protein localises to the cell inner membrane. The catalysed reaction is UDP-N-acetyl-alpha-D-muramoyl-L-alanyl-gamma-D-glutamyl-meso-2,6-diaminopimeloyl-D-alanyl-D-alanine + di-trans,octa-cis-undecaprenyl phosphate = di-trans,octa-cis-undecaprenyl diphospho-N-acetyl-alpha-D-muramoyl-L-alanyl-D-glutamyl-meso-2,6-diaminopimeloyl-D-alanyl-D-alanine + UMP. It functions in the pathway cell wall biogenesis; peptidoglycan biosynthesis. Catalyzes the initial step of the lipid cycle reactions in the biosynthesis of the cell wall peptidoglycan: transfers peptidoglycan precursor phospho-MurNAc-pentapeptide from UDP-MurNAc-pentapeptide onto the lipid carrier undecaprenyl phosphate, yielding undecaprenyl-pyrophosphoryl-MurNAc-pentapeptide, known as lipid I. This chain is Phospho-N-acetylmuramoyl-pentapeptide-transferase, found in Brachyspira hyodysenteriae (strain ATCC 49526 / WA1).